Consider the following 149-residue polypeptide: MLAKATLAIVLSAASLPVLAAQCEATIESNDAMQYNLKEMVVDKSCKQFTVHLKHVGKMAKVAMGHNWVLTKEADKQGVATDGMNAGLAQDYVKAGDTRVIAHTKVIGGGESDSVTFDVSKLTPGEAYAYFCSFPGHWAMMKGTLKLSN.

An N-terminal signal peptide occupies residues 1–20 (MLAKATLAIVLSAASLPVLA). In terms of domain architecture, Plastocyanin-like spans 21 to 149 (AQCEATIESN…MMKGTLKLSN (129 aa)). An intrachain disulfide couples Cys-23 to Cys-46. Positions 66, 132, 137, and 141 each coordinate Cu cation.

The protein resides in the periplasm. In terms of biological role, transfers electrons from cytochrome c551 to cytochrome oxidase. The chain is Azurin (azu) from Achromobacter denitrificans (Alcaligenes denitrificans).